The following is a 392-amino-acid chain: V-type proton ATPase subunit C (392 aa).

Ala-2 bears the N-acetylalanine mark.

Belongs to the V-ATPase C subunit family. In terms of assembly, V-ATPase is a heteromultimeric enzyme composed of a peripheral catalytic V1 complex (components A to H) attached to an integral membrane V0 proton pore complex (components: a, c, c', c'', d, e, f and VOA1). Interacts directly with VMA4.

Its subcellular location is the vacuole membrane. Its function is as follows. Subunit of the V1 complex of vacuolar(H+)-ATPase (V-ATPase), a multisubunit enzyme composed of a peripheral complex (V1) that hydrolyzes ATP and a membrane integral complex (V0) that translocates protons. V-ATPase is responsible for acidifying and maintaining the pH of intracellular compartments. Subunit C is necessary for the assembly of the catalytic sector of the enzyme and is likely to have a specific function in its catalytic activity. Reversibly leaves the enzyme after glucose depletion, causing the catalytic subcomplex V1 to detach from the V0 section. This Saccharomyces cerevisiae (strain ATCC 204508 / S288c) (Baker's yeast) protein is V-type proton ATPase subunit C.